Here is a 100-residue protein sequence, read N- to C-terminus: Urease subunit gamma (100 aa).

The protein belongs to the urease gamma subunit family. As to quaternary structure, heterotrimer of UreA (gamma), UreB (beta) and UreC (alpha) subunits. Three heterotrimers associate to form the active enzyme.

Its subcellular location is the cytoplasm. The catalysed reaction is urea + 2 H2O + H(+) = hydrogencarbonate + 2 NH4(+). It functions in the pathway nitrogen metabolism; urea degradation; CO(2) and NH(3) from urea (urease route): step 1/1. This is Urease subunit gamma from Ruegeria sp. (strain TM1040) (Silicibacter sp.).